The following is a 512-amino-acid chain: Glutathione-binding protein GsiB (512 aa).

An N-terminal signal peptide occupies residues 1-26; sequence MARAVHRSGLVALGIVTALMASCAFA.

Belongs to the bacterial solute-binding protein 5 family. As to quaternary structure, the complex is composed of two ATP-binding proteins (GsiA), two transmembrane proteins (GsiC and GsiD) and a solute-binding protein (GsiB).

The protein localises to the periplasm. Part of the ABC transporter complex GsiABCD involved in glutathione import. Binds glutathione. This is Glutathione-binding protein GsiB from Shigella dysenteriae serotype 1 (strain Sd197).